Here is a 525-residue protein sequence, read N- to C-terminus: MSLAEAIRLWNEGVLAADKKDWKGALEAFSEVQDPHSRICFNIGCVNTILENLQAAEQAFTKSINRDKHSAVAYFQRGMLYYRMEKYDLAIKDLKEALTQLRGNQLIDYKILGLQFKLFACEVLYNIALMHAKKEEWKKAEEQLALATNMKSEPRHSKIDKAMESIWKQKLFEPVVIPVGRLFRPNERQVAQLAKKDYLGKATVVASVVHQDNFSGFAPLQPQSAEPPPRPKTPEIFRALEGEAHRVLFGFVPETPEELQVMPGNIVFVLKKGSDNWATVMFNGQKGLVPCNYLEPVELRIHPQSQPQEDTSPESDIPPPPNSSPPGRLQLSPGHKQKEPKELKLSVPMPYMLKVHYKYTVVMETRLGLPYSQLRNMVSKKLALSPEHTKLSYRRRDSHELLLLSEESMKDAWGQVKNYCLTLWCEHTVGDQGLIDEPIQRENSDASKQTTEPQPKEGTQVVAIFSYEAAQPEDLEFVEGDVILVLSHVNEEWLEGECKGKVGIFPKAFVEGCAAKNLEGIPREV.

3 TPR repeats span residues Ser37 to Ser70, Ala71 to Asn104, and Cys121 to Pro154. Phosphothreonine is present on Thr233. One can recognise an SH3 1 domain in the interval Leu240–Leu299. Residues Gln304–Leu343 are disordered. A phosphoserine mark is found at Ser324 and Ser398. Residues Pro350–Thr428 form the PB1 domain. Residues Glu437–Glu457 form a disordered region. The SH3 2 domain maps to Lys456–Ala515.

This sequence belongs to the NCF2/NOXA1 family. Component of the phagocyte NADPH oxidase complex composed of an obligatory core heterodimer formed by the membrane proteins CYBA and CYBB and the cytosolic regulatory subunits NCF1/p47-phox, NCF2/p67-phox, NCF4/p40-phox and the small GTPase RAC1 or RAC2. Part of a cytosolic complex composed at least by NCF1, NCF2 and NCF4. Interacts with NCF4. Interacts (via the C-terminal SH3 domain) with NCF1 (via C-terminus). Interacts with SYTL1 and RAC1. May interact with NOXO1. Interacts with S100A8 and calprotectin (S100A8/9). Interacts with GBP7 (via GB1/RHD3-type G domain). Interacts with CYBB; the interaction is enhanced in the presence of GBP7.

The protein localises to the cytoplasm. NCF2, NCF1, and a membrane bound cytochrome b558 are required for activation of the latent NADPH oxidase (necessary for superoxide production). Its function is as follows. Subunit of the phagocyte NADPH oxidase complex that mediates the transfer of electrons from cytosolic NADPH to O2 to produce the superoxide anion (O2(-)). In the activated complex, electrons are first transferred from NADPH to flavin adenine dinucleotide (FAD) and subsequently transferred via two heme molecules to molecular oxygen, producing superoxide through an outer-sphere reaction. Activation of the NADPH oxidase complex is initiated by the assembly of cytosolic subunits of the NADPH oxidase complex with the core NADPH oxidase complex to form a complex at the plasma membrane or phagosomal membrane. This activation process is initiated by phosphorylation dependent binding of the cytosolic NCF1/p47-phox subunit to the C-terminus of CYBA/p22-phox. The chain is Neutrophil cytosol factor 2 from Mus musculus (Mouse).